A 369-amino-acid chain; its full sequence is MLMKTTTVHAPASQGTSGIVLDSLRVAYHGNVVLKPLSLTIEPGEVLALIGPSGSGKTTVLRAVAGFVQPAGGRILIGDTDVTHLPPYKRGLAMVVQNYALFPHLKVEDNVAFGLRAQKQPKALINERVTQALKTVGMSDYAARYPHQLSGGQQQRVAIARAIAVRPRVLLLDEPLSALDAQIRHNMVEEIARLHRELPELTILYVTHDQTEALTLADKIGIMKDGSLIAHGETRALYQHPPNRFAAEFLGRANILSAIALGITEAPGLVDVSCGGAVIRAFSRGSHHGYNKLLCIRPQHLSLTPRSAYSNRFNATLQSVHWQGDLTHLLCDVAGETVRMVLTHVNPLPRVGDKLALWFEPDDAVLIEV.

In terms of domain architecture, ABC transporter spans 19–250 (IVLDSLRVAY…PPNRFAAEFL (232 aa)). An ATP-binding site is contributed by 51 to 58 (GPSGSGKT).

Belongs to the ABC transporter superfamily. 2-aminoethylphosphonate importer (TC 3.A.1.11.5) family.

The protein localises to the cell inner membrane. In terms of biological role, probably part of the PhnSTUV complex (TC 3.A.1.11.5) involved in 2-aminoethylphosphonate import. Probably responsible for energy coupling to the transport system. The protein is Putative 2-aminoethylphosphonate import ATP-binding protein PhnT (phnT) of Salmonella typhimurium (strain LT2 / SGSC1412 / ATCC 700720).